The chain runs to 245 residues: MAAAIASSLIRQKRQAREREKSNACKCVSSPSKGKTSCDKNKLNVFSRVKLFGSKKRRRRRPEPQLKGIVTKLYSRQGYHLQLQADGTIDGTKDEDSTYTLFNLIPVGLRVVAIQGVQTKLYLAMNSEGYLYTSELFTPECKFKESVFENYYVTYSSMIYRQQQSGRGWYLGLNKEGEIMKGNHVKKNKPAAHFLPKPLKVAMYKEPSLHDLTEFSRSGSGTPTKSRSVSGVLNGGKSMSHNEST.

Positions 1–36 (MAAAIASSLIRQKRQAREREKSNACKCVSSPSKGKT) are disordered. The segment at 1–62 (MAAAIASSLI…GSKKRRRRRP (62 aa)) is mediates targeting to the nucleus. Positions 67-201 (KGIVTKLYSR…AHFLPKPLKV (135 aa)) are mediates interaction with sodium channels. The residue at position 208 (Ser208) is a Phosphoserine. The tract at residues 213-245 (TEFSRSGSGTPTKSRSVSGVLNGGKSMSHNEST) is disordered. A compositionally biased stretch (polar residues) spans 215-245 (FSRSGSGTPTKSRSVSGVLNGGKSMSHNEST).

Belongs to the heparin-binding growth factors family. In terms of assembly, interacts with SCN8A; regulates SCN8A activity. Interacts with SCN1A; may regulate SCN1A activity. Interacts with SCN5A; the interaction is direct and may regulate SNC5A density at membranes and function. May also interact with SCN2A and SCN11A. Interacts with MAPK8IP2; may regulate the MAPK8IP2 scaffolding activity. Post-translationally, may be phosphorylated. Ubiquitously expressed. Predominantly expressed in the nervous system.

The protein localises to the nucleus. It localises to the cytoplasm. It is found in the cell projection. Its subcellular location is the filopodium. The protein resides in the growth cone. The protein localises to the dendrite. It localises to the cell membrane. It is found in the sarcolemma. Microtubule-binding protein which directly binds tubulin and is involved in both polymerization and stabilization of microtubules. Through its action on microtubules, may participate in the refinement of axons by negatively regulating axonal and leading processes branching. Plays a crucial role in neuron polarization and migration in the cerebral cortex and the hippocampus. Regulates voltage-gated sodium channel transport and function. May also play a role in MAPK signaling. Required for the development of axonal initial segment-targeting inhibitory GABAergic synapses made by chandelier neurons. This chain is Fibroblast growth factor 13, found in Homo sapiens (Human).